A 505-amino-acid chain; its full sequence is Deoxyguanosinetriphosphate triphosphohydrolase (505 aa).

Residues 66–273 enclose the HD domain; sequence RLTHSMEVQQ…MEAADDISYC (208 aa).

Belongs to the dGTPase family. Type 1 subfamily. In terms of assembly, homotetramer. The cofactor is Mg(2+).

It carries out the reaction dGTP + H2O = 2'-deoxyguanosine + triphosphate + H(+). In terms of biological role, dGTPase preferentially hydrolyzes dGTP over the other canonical NTPs. The protein is Deoxyguanosinetriphosphate triphosphohydrolase of Salmonella enteritidis PT4 (strain P125109).